Reading from the N-terminus, the 863-residue chain is MSSPTSTPSRRRNKRGRGSNPPTPHGEEVQSPPSQRRRTEDSTSIGELLPMPTSPSGDVQSPSGQELLFSSPAPSRHSAHQSELDLSSPLTYGTPSSRVEGTPRSGIRGTPARQRPDLGSARKVKQVDLHSDQPAAEELVTSEQSLGQKLVIWGTDVNVATCKEKFQRFVQRFIDPSAKEEDNVGLDLNEPIYMQRLEEINVVGDPFLNIDCDHLRNFDQDLYRQLVCYPQEVIPTFDMAANEIFFERYPDSILEHQIQVRPYNALKTRNMRSLNPEDIDQLITISGMVIRTSQIIPEMQEAFFKCQVCAFTTRVEIDRGRIAEPSVCKHCNTTHSMALIHNRSMFSDKQMIKLQESPEDMPAGQTPHTTILYGHNDLVDKVQPGDRVNVTGIYRAVPIRVNPRVRNVKSVYKTHIDVIHYRKTDSKRLHGIDEDTEQKLFTEERVAMLKELAAKPDIYERLAAALAPSIYEHEDIKKGILLQLFGGTRKDFSHTGRGKFRAEVNILLCGDPGTSKSQLLQYVFNLVPRGQYTSGKGSSAVGLTAYVMKDPETRQLVLQTGALVLSDNGICCIDEFDKMNESTRSVLHEVMEQQTLSIAKAGIICQLNARTSVLAAANPVESQWNPKKTTIENIQLPHTLLSRFDLIFLMLDPQDEAYDRRLAHHLVALYYQSEEQMKEEHLDMAVLKDYIAYARTYVNPRLSEEASQALIEAYVSMRKIGSGRGMVSAYPRQLESLIRLSEAHAKVRFSNKVETIDVEEAKRLHREALKQSATDPRTGIVDISILTTGMSATARKRKEELAQVLKKLIQSKGKTPALKYQQLFEDLRGQSDAAITKDMFDEALHALADDDYLTVTGKTVRLL.

The disordered stretch occupies residues 1–130 (MSSPTSTPSR…ARKVKQVDLH (130 aa)). Polar residues-rich tracts occupy residues 54 to 64 (SPSGDVQSPSG) and 84 to 99 (LDLSSPLTYGTPSSRV). The segment at 306-331 (CQVCAFTTRVEIDRGRIAEPSVCKHC) adopts a C4-type zinc-finger fold. The MCM domain occupies 458-667 (IYERLAAALA…YDRRLAHHLV (210 aa)). 8 residues coordinate ATP: Tyr471, Arg497, Lys516, Ser517, Asn618, Arg643, Arg732, and Glu735. The short motif at 642-645 (SRFD) is the Arginine finger element.

The protein belongs to the MCM family. In terms of assembly, component of the mcm2-7 complex (RLF-M). The complex forms a toroidal hexameric ring with the proposed subunit order mcm2-mcm6-mcm4-mcm7-mcm3-mcm5. The heterodimer of mmcm3/mcm5 interacts with mcm4, mmcm6, mcm7 and weakly with mcm2. Begins to associate with zmcm6 at the neurula stage. Component of the CMG helicase complex, composed of the mcm2-7 complex, the GINS complex and cdc45. Hyperphosphorylated during mitosis in a mechanism requiring cdc2-cyclin B and other kinases. Undergoes dephosphorylation after exiting mitosis, existing in a partially phosphorylated state in the cytosolic interphase mcm complex which associates with the pre-replication complexes (pre-Rcs). Complete dephosphorylation inactivates the mcm complex, preventing its binding to chromatin. Becomes actively phosphorylated during S phase once the mcm complex is assembled on the chromatin. This chromatin-associated phosphorylation occurs during the activation of the pre-Rcs and is independent of cdks. Phosphorylated by the cdc7-dbf4b complex.

Its subcellular location is the nucleus. It is found in the chromosome. The catalysed reaction is ATP + H2O = ADP + phosphate + H(+). Its function is as follows. Acts as a component of the MCM2-7 complex (MCM complex) which is the replicative helicase essential for 'once per cell cycle' DNA replication initiation and elongation in eukaryotic cells. Core component of CDC45-MCM-GINS (CMG) helicase, the molecular machine that unwinds template DNA during replication, and around which the replisome is built. The active ATPase sites in the MCM2-7 ring are formed through the interaction surfaces of two neighboring subunits such that a critical structure of a conserved arginine finger motif is provided in trans relative to the ATP-binding site of the Walker A box of the adjacent subunit. The six ATPase active sites, however, are likely to contribute differentially to the complex helicase activity. The polypeptide is DNA replication licensing factor mcm4-B (mcm4-b) (Xenopus laevis (African clawed frog)).